The chain runs to 192 residues: Probable cobalt-precorrin-6B C(15)-methyltransferase (decarboxylating) (192 aa).

Residues Thr-20, 44-48 (GSGTG), Glu-68, and Ala-96 contribute to the S-adenosyl-L-methionine site.

It belongs to the methyltransferase superfamily. Archaeal-type CbiT family.

It carries out the reaction Co-precorrin-6B + S-adenosyl-L-methionine = Co-precorrin-7 + S-adenosyl-L-homocysteine + CO2. It participates in cofactor biosynthesis; adenosylcobalamin biosynthesis; cob(II)yrinate a,c-diamide from sirohydrochlorin (anaerobic route): step 8/10. Its function is as follows. Catalyzes the methylation of C-15 in cobalt-precorrin-6B followed by the decarboxylation of C-12 to form cobalt-precorrin-7. In Sulfolobus acidocaldarius (strain ATCC 33909 / DSM 639 / JCM 8929 / NBRC 15157 / NCIMB 11770), this protein is Probable cobalt-precorrin-6B C(15)-methyltransferase (decarboxylating).